Here is a 345-residue protein sequence, read N- to C-terminus: Protein sdf-9 (345 aa).

The 252-residue stretch at 33–284 (NRNRVVKIVP…SFIYEAVLDY (252 aa)) folds into the Tyrosine-protein phosphatase domain.

This sequence belongs to the protein-tyrosine phosphatase family. As to expression, expressed in the 2 embryonic head hypodermal cells XXXL/R.

The protein localises to the cytoplasm. It localises to the cell membrane. Its function is as follows. Together with eak-4 and phosphatase eak-6, negatively regulates dauer larva formation downstream of insulin-like receptor daf-2 and in parallel of age-1, pdk-1 and akt-1. The polypeptide is Protein sdf-9 (Caenorhabditis elegans).